A 130-amino-acid chain; its full sequence is Small ribosomal subunit protein uS8 (130 aa).

It belongs to the universal ribosomal protein uS8 family. Part of the 30S ribosomal subunit. Contacts proteins S5 and S12.

In terms of biological role, one of the primary rRNA binding proteins, it binds directly to 16S rRNA central domain where it helps coordinate assembly of the platform of the 30S subunit. In Cronobacter sakazakii (strain ATCC BAA-894) (Enterobacter sakazakii), this protein is Small ribosomal subunit protein uS8.